Here is a 419-residue protein sequence, read N- to C-terminus: Murein hydrolase activator EnvC (419 aa).

Positions 1-34 (MTRAVKPRRFAIRPIIYASVLSAGVLLCAFSAHA) are cleaved as a signal peptide. Coiled-coil stretches lie at residues 35-124 (DERD…LDAA) and 155-271 (LNQA…ATRK). Residues 252–270 (EREAREAQAVRDRQKEATR) show a composition bias toward basic and acidic residues. A disordered region spans residues 252–290 (EREAREAQAVRDRQKEATRKGTTYKPTESEKSLMSRTGG).

This sequence belongs to the peptidase M23B family.

The protein localises to the periplasm. Functionally, activator of the cell wall hydrolases AmiA and AmiB. Required for septal murein cleavage and daughter cell separation during cell division. In vitro, exhibits weak endoproteolytic activity on beta-casein. The sequence is that of Murein hydrolase activator EnvC (envC) from Escherichia coli (strain K12).